The sequence spans 227 residues: Ribonuclease 3 (227 aa).

In terms of domain architecture, RNase III spans 6–128; sequence ASDYQQRIGY…VIAAIYLDAD (123 aa). Glu41 serves as a coordination point for Mg(2+). The active site involves Asp45. Mg(2+) is bound by residues Asp114 and Glu117. Glu117 is an active-site residue. One can recognise a DRBM domain in the interval 155 to 225; it reads DPKTRLQEWL…ASHAIDQLDS (71 aa). Over residues 203 to 212 the composition is skewed to basic and acidic residues; the sequence is GEGSSRRLAE. A disordered region spans residues 203 to 227; that stretch reads GEGSSRRLAEQDAASHAIDQLDSNK.

It belongs to the ribonuclease III family. As to quaternary structure, homodimer. Mg(2+) serves as cofactor.

It is found in the cytoplasm. The catalysed reaction is Endonucleolytic cleavage to 5'-phosphomonoester.. Its function is as follows. Digests double-stranded RNA. Involved in the processing of primary rRNA transcript to yield the immediate precursors to the large and small rRNAs (23S and 16S). Processes some mRNAs, and tRNAs when they are encoded in the rRNA operon. Processes pre-crRNA and tracrRNA of type II CRISPR loci if present in the organism. This Xylella fastidiosa (strain M23) protein is Ribonuclease 3.